The primary structure comprises 237 residues: Uridylate kinase (237 aa).

11–14 is an ATP binding site; that stretch reads KLSG. Glycine 53 contacts UMP. Glycine 54 and arginine 58 together coordinate ATP. UMP-binding positions include aspartate 73 and 134–141; that span reads TGNPFFTT. ATP-binding residues include threonine 161, tyrosine 167, and aspartate 170.

The protein belongs to the UMP kinase family. Homohexamer.

It localises to the cytoplasm. The catalysed reaction is UMP + ATP = UDP + ADP. The protein operates within pyrimidine metabolism; CTP biosynthesis via de novo pathway; UDP from UMP (UMPK route): step 1/1. Its activity is regulated as follows. Inhibited by UTP. Its function is as follows. Catalyzes the reversible phosphorylation of UMP to UDP. This Burkholderia ambifaria (strain ATCC BAA-244 / DSM 16087 / CCUG 44356 / LMG 19182 / AMMD) (Burkholderia cepacia (strain AMMD)) protein is Uridylate kinase.